The primary structure comprises 392 residues: Phosphoglycerate kinase (392 aa).

Residues 21-23 (DMN), Arg-36, 59-62 (HLGR), Arg-114, and Arg-147 contribute to the substrate site. Residues Lys-198, Glu-320, and 346–349 (GGDT) contribute to the ATP site.

The protein belongs to the phosphoglycerate kinase family. In terms of assembly, monomer.

It is found in the cytoplasm. It catalyses the reaction (2R)-3-phosphoglycerate + ATP = (2R)-3-phospho-glyceroyl phosphate + ADP. It functions in the pathway carbohydrate degradation; glycolysis; pyruvate from D-glyceraldehyde 3-phosphate: step 2/5. The protein is Phosphoglycerate kinase of Neisseria meningitidis serogroup C / serotype 2a (strain ATCC 700532 / DSM 15464 / FAM18).